The primary structure comprises 373 residues: Probable jasmonic acid carboxyl methyltransferase 1 (373 aa).

Tyrosine 18 lines the S-adenosyl-L-homocysteine pocket. Jasmonate is bound at residue glutamine 25. Residues cysteine 59, asparagine 64, aspartate 96, leucine 97, serine 135, and phenylalanine 136 each coordinate S-adenosyl-L-homocysteine. Jasmonate-binding residues include histidine 156 and tryptophan 157. Mg(2+)-binding residues include asparagine 174, aspartate 260, phenylalanine 262, and asparagine 263.

It belongs to the methyltransferase superfamily. Type-7 methyltransferase family. Mg(2+) is required as a cofactor.

Its subcellular location is the cytoplasm. It localises to the nucleus. It catalyses the reaction jasmonate + S-adenosyl-L-methionine = methyl (-)-jasmonate + S-adenosyl-L-homocysteine. The protein operates within lipid metabolism; oxylipin biosynthesis. In terms of biological role, catalyzes the methylation of jasmonate into methyljasmonate, a plant volatile that acts as an important cellular regulator mediating diverse developmental processes and defense responses. The polypeptide is Probable jasmonic acid carboxyl methyltransferase 1 (Theobroma cacao (Cacao)).